The chain runs to 485 residues: Serine/threonine-protein kinase 4 (485 aa).

One can recognise a Protein kinase domain in the interval 30 to 281; sequence FDVLEKLGEG…ATELLQHPFI (252 aa). ATP is bound by residues 36–44 and Lys-59; that span reads LGEGSYGSV. Catalysis depends on Asp-149, which acts as the Proton acceptor. Position 183 is a phosphothreonine; by autocatalysis (Thr-183). Residues 431–478 enclose the SARAH domain; it reads YSFLKDWSVAEVQLKLNSLDPMMEREIEEIHHKYQAKRQPILEAIESK.

The protein belongs to the protein kinase superfamily. STE Ser/Thr protein kinase family. STE20 subfamily. In terms of assembly, homodimer; mediated via the coiled-coil region. It depends on Mg(2+) as a cofactor. In terms of processing, autophosphorylated on Thr-183. Post-translationally, proteolytically cleaved by caspase-3 during apoptosis at Asp-326 resulting in a 37 kDa form. Proteolytic cleavage results in kinase activation and nuclear translocation of the truncated form (MST1/N).

It localises to the cytoplasm. Its subcellular location is the nucleus. The catalysed reaction is L-seryl-[protein] + ATP = O-phospho-L-seryl-[protein] + ADP + H(+). The enzyme catalyses L-threonyl-[protein] + ATP = O-phospho-L-threonyl-[protein] + ADP + H(+). The C-terminal non-catalytic region inhibits the kinase activity, the enzyme is activated by caspase-cleavage. Homodimerization and autophosphorylation of Thr-183 is also required for full activation. Stress-activated, pro-apoptotic kinase which, following caspase-cleavage, enters the nucleus and induces chromatin condensation followed by internucleosomal DNA fragmentation. Key component of the Hippo signaling pathway which plays a pivotal role in organ size control and tumor suppression by restricting proliferation and promoting apoptosis. The core of this pathway is composed of a kinase cascade wherein stk3/mst2 and stk4/mst1, in complex with its regulatory protein sav1, phosphorylates and activates lats1/2 in complex with its regulatory protein mob1, which in turn phosphorylates and inactivates yap1 oncoprotein and wwtr1/taz. Phosphorylation of yap1 by lats2 inhibits its translocation into the nucleus to regulate cellular genes important for cell proliferation, cell death, and cell migration. Phosphorylates 'Ser-14' of histone H2B (H2BS14ph) during apoptosis. This chain is Serine/threonine-protein kinase 4 (stk4), found in Xenopus laevis (African clawed frog).